The chain runs to 358 residues: Probable translocation protein Y4yK (358 aa).

Belongs to the FliN/MopA/SpaO family.

In terms of biological role, could be involved in the secretion of an unknown factor. This is Probable translocation protein Y4yK from Sinorhizobium fredii (strain NBRC 101917 / NGR234).